The sequence spans 71 residues: Small ribosomal subunit protein bS21 (71 aa).

A disordered region spans residues 38-71 (YEKPTTVRKRAKAAAQKRHAKKLSRENARRVRLY). Residues 43–59 (TVRKRAKAAAQKRHAKK) are compositionally biased toward basic residues. Residues 60–71 (LSRENARRVRLY) are compositionally biased toward basic and acidic residues.

It belongs to the bacterial ribosomal protein bS21 family.

In Aliivibrio fischeri (strain ATCC 700601 / ES114) (Vibrio fischeri), this protein is Small ribosomal subunit protein bS21.